Reading from the N-terminus, the 309-residue chain is Probable nitrogen assimilation transcriptional activator (309 aa).

The 57-residue stretch at 1-57 folds into the HTH lysR-type domain; that stretch reads MRLEQLQAFLKVAELGSFQQAALQSEVTQSTISRQIQGLESALKCQLFHRGAQAKLT. The segment at residues 18–38 is a DNA-binding region (H-T-H motif); the sequence is FQQAALQSEVTQSTISRQIQG.

Belongs to the LysR transcriptional regulatory family.

Seems to regulate utilization of fixed nitrogen by controlling the expression of a certain gene(s) involved in nitrogen metabolism. This Synechocystis sp. (strain ATCC 27184 / PCC 6803 / Kazusa) protein is Probable nitrogen assimilation transcriptional activator (ntcB).